A 424-amino-acid chain; its full sequence is Dihydroorotase (424 aa).

Zn(2+) contacts are provided by histidine 61 and histidine 63. Substrate contacts are provided by residues histidine 63–arginine 65 and asparagine 95. Residues aspartate 153, histidine 180, and histidine 233 each contribute to the Zn(2+) site. Asparagine 279 contacts substrate. Aspartate 306 lines the Zn(2+) pocket. Residue aspartate 306 is part of the active site. Histidine 310 serves as a coordination point for substrate.

It belongs to the metallo-dependent hydrolases superfamily. DHOase family. Class I DHOase subfamily. Requires Zn(2+) as cofactor.

The catalysed reaction is (S)-dihydroorotate + H2O = N-carbamoyl-L-aspartate + H(+). The protein operates within pyrimidine metabolism; UMP biosynthesis via de novo pathway; (S)-dihydroorotate from bicarbonate: step 3/3. Its function is as follows. Catalyzes the reversible cyclization of carbamoyl aspartate to dihydroorotate. The chain is Dihydroorotase from Pelobacter propionicus (strain DSM 2379 / NBRC 103807 / OttBd1).